Reading from the N-terminus, the 726-residue chain is Catalase-peroxidase (726 aa).

The tract at residues 1–33 (MSTSDDIHNTTATGKCPFHQGGHDQSAGGGTTT) is disordered. The tryptophyl-tyrosyl-methioninium (Trp-Tyr) (with M-252) cross-link spans 105–226 (WHGAGTYRSI…LGATEMGLIY (122 aa)). His106 acts as the Proton acceptor in catalysis. The segment at residues 226 to 252 (YVNPEGPDHSGEPLSAAAAIRATFGNM) is a cross-link (tryptophyl-tyrosyl-methioninium (Tyr-Met) (with W-105)). Position 267 (His267) interacts with heme b.

It belongs to the peroxidase family. Peroxidase/catalase subfamily. In terms of assembly, homodimer or homotetramer. Heme b is required as a cofactor. Post-translationally, formation of the three residue Trp-Tyr-Met cross-link is important for the catalase, but not the peroxidase activity of the enzyme.

It catalyses the reaction H2O2 + AH2 = A + 2 H2O. It carries out the reaction 2 H2O2 = O2 + 2 H2O. Bifunctional enzyme with both catalase and broad-spectrum peroxidase activity. The sequence is that of Catalase-peroxidase from Escherichia coli (strain UTI89 / UPEC).